Here is a 203-residue protein sequence, read N- to C-terminus: Small ribosomal subunit protein uS4 (203 aa).

The S4 RNA-binding domain maps to 93–154 (CRFDNVVFRA…KSRNMDAVRN (62 aa)).

Belongs to the universal ribosomal protein uS4 family. Part of the 30S ribosomal subunit. Contacts protein S5. The interaction surface between S4 and S5 is involved in control of translational fidelity.

One of the primary rRNA binding proteins, it binds directly to 16S rRNA where it nucleates assembly of the body of the 30S subunit. Functionally, with S5 and S12 plays an important role in translational accuracy. The protein is Small ribosomal subunit protein uS4 of Chloroherpeton thalassium (strain ATCC 35110 / GB-78).